Consider the following 405-residue polypeptide: MGDKAGTRVFKKSSPNCKVTVYLGKRDFVDHLDQVDPVDGVILVDPDYLKERKVFVTLTCAFRYGREDLDVLGLSFRKDLYISTFQAFPPIAEERKANSRLQERLLKKLGQQAHPFYFTIPQNLPCSVTLQPGPEDTGKACGVDFEIRAFCAKSIEEKIHKRNSVRLVIRKVQYAPEKPGPQPMVETTRSFLMSDRSLHLEASLDKELYYHGEPISVNVHVTNNSTKTVKRVKISVRQYADICLFSTAQYKCPVAQVEADDQVSSSSTFCKVYTLTPTLDKNREKRGLALDGKLKHEDTNLASSTIVKDVTNKEVLGILVSYRVKVKLVISRGGDVSVELPFVLMHPKPTELPISRPHSAVPESDPPIDTNLIEFESNSFSQDDDFVFEDFARLRLKGMADDEDC.

It belongs to the arrestin family.

The protein localises to the cytoplasm. The protein is Arrestin red cell isoform 2 of Oncorhynchus mykiss (Rainbow trout).